We begin with the raw amino-acid sequence, 94 residues long: Acylphosphatase (94 aa).

In terms of domain architecture, Acylphosphatase-like spans 8–94; sequence TVHVIVKGKV…EKRYKHFAQL (87 aa). Catalysis depends on residues arginine 23 and asparagine 41.

Belongs to the acylphosphatase family.

The enzyme catalyses an acyl phosphate + H2O = a carboxylate + phosphate + H(+). This chain is Acylphosphatase (acyP), found in Bordetella parapertussis (strain 12822 / ATCC BAA-587 / NCTC 13253).